Reading from the N-terminus, the 325-residue chain is L-lactate dehydrogenase 1 (325 aa).

NAD(+) is bound by residues valine 17, aspartate 38, lysine 43, tyrosine 68, and 82 to 83; that span reads GA. Substrate-binding positions include glutamine 85, arginine 91, and 123 to 126; that span reads NPVD. Residues 121-123 and serine 146 each bind NAD(+); that span reads AAN. Substrate is bound at residue 151–154; the sequence is DTAR. Beta-D-fructose 1,6-bisphosphate contacts are provided by arginine 156 and histidine 171. Histidine 178 serves as the catalytic Proton acceptor. Tyrosine 223 bears the Phosphotyrosine mark. Threonine 232 contacts substrate.

This sequence belongs to the LDH/MDH superfamily. LDH family. In terms of assembly, homotetramer.

It localises to the cytoplasm. It catalyses the reaction (S)-lactate + NAD(+) = pyruvate + NADH + H(+). It functions in the pathway fermentation; pyruvate fermentation to lactate; (S)-lactate from pyruvate: step 1/1. Allosterically activated by fructose 1,6-bisphosphate (FBP). Its function is as follows. Catalyzes the conversion of lactate to pyruvate. The chain is L-lactate dehydrogenase 1 from Lactococcus lactis subsp. cremoris (Streptococcus cremoris).